The chain runs to 731 residues: DNA ligase (731 aa).

Residues 59–63 (DSEYD), 108–109 (SL), and glutamate 142 contribute to the NAD(+) site. Lysine 144 (N6-AMP-lysine intermediate) is an active-site residue. NAD(+) is bound by residues arginine 165, glutamate 202, lysine 318, and lysine 342. 4 residues coordinate Zn(2+): cysteine 434, cysteine 437, cysteine 452, and cysteine 458. The BRCT domain occupies 645-731 (LASSPLSGKI…ENDGQDSIKI (87 aa)).

Belongs to the NAD-dependent DNA ligase family. LigA subfamily. Mg(2+) is required as a cofactor. Requires Mn(2+) as cofactor.

The catalysed reaction is NAD(+) + (deoxyribonucleotide)n-3'-hydroxyl + 5'-phospho-(deoxyribonucleotide)m = (deoxyribonucleotide)n+m + AMP + beta-nicotinamide D-nucleotide.. DNA ligase that catalyzes the formation of phosphodiester linkages between 5'-phosphoryl and 3'-hydroxyl groups in double-stranded DNA using NAD as a coenzyme and as the energy source for the reaction. It is essential for DNA replication and repair of damaged DNA. This chain is DNA ligase, found in Zymomonas mobilis subsp. mobilis (strain ATCC 31821 / ZM4 / CP4).